The chain runs to 194 residues: Molybdenum cofactor guanylyltransferase (194 aa).

GTP is bound by residues 12–14 (LAG), Lys25, Asn53, Asp71, and Asp101. Asp101 is a Mg(2+) binding site.

This sequence belongs to the MobA family. As to quaternary structure, monomer. The cofactor is Mg(2+).

The protein localises to the cytoplasm. It catalyses the reaction Mo-molybdopterin + GTP + H(+) = Mo-molybdopterin guanine dinucleotide + diphosphate. Transfers a GMP moiety from GTP to Mo-molybdopterin (Mo-MPT) cofactor (Moco or molybdenum cofactor) to form Mo-molybdopterin guanine dinucleotide (Mo-MGD) cofactor. This chain is Molybdenum cofactor guanylyltransferase, found in Escherichia coli O6:H1 (strain CFT073 / ATCC 700928 / UPEC).